The chain runs to 103 residues: Small ribosomal subunit protein uS10 (103 aa).

The protein belongs to the universal ribosomal protein uS10 family. As to quaternary structure, part of the 30S ribosomal subunit.

Functionally, involved in the binding of tRNA to the ribosomes. This chain is Small ribosomal subunit protein uS10, found in Methylibium petroleiphilum (strain ATCC BAA-1232 / LMG 22953 / PM1).